Here is a 266-residue protein sequence, read N- to C-terminus: Aliphatic sulfonates import ATP-binding protein SsuB (266 aa).

The 222-residue stretch at 23–244 (LALDAITKHY…RRGSAKLAEL (222 aa)) folds into the ABC transporter domain. Position 55 to 62 (55 to 62 (GRSGCGKS)) interacts with ATP.

The protein belongs to the ABC transporter superfamily. Aliphatic sulfonates importer (TC 3.A.1.17.2) family. As to quaternary structure, the complex is composed of two ATP-binding proteins (SsuB), two transmembrane proteins (SsuC) and a solute-binding protein (SsuA).

It is found in the cell inner membrane. The catalysed reaction is ATP + H2O + aliphatic sulfonate-[sulfonate-binding protein]Side 1 = ADP + phosphate + aliphatic sulfonateSide 2 + [sulfonate-binding protein]Side 1.. Its function is as follows. Part of the ABC transporter complex SsuABC involved in aliphatic sulfonates import. Responsible for energy coupling to the transport system. The chain is Aliphatic sulfonates import ATP-binding protein SsuB from Pectobacterium atrosepticum (strain SCRI 1043 / ATCC BAA-672) (Erwinia carotovora subsp. atroseptica).